A 309-amino-acid polypeptide reads, in one-letter code: Homoserine O-succinyltransferase (309 aa).

Cys142 serves as the catalytic Acyl-thioester intermediate. Residues Lys163 and Ser192 each coordinate substrate. His235 acts as the Proton acceptor in catalysis. The active site involves Glu237. Arg249 serves as a coordination point for substrate.

It belongs to the MetA family.

It is found in the cytoplasm. It catalyses the reaction L-homoserine + succinyl-CoA = O-succinyl-L-homoserine + CoA. It participates in amino-acid biosynthesis; L-methionine biosynthesis via de novo pathway; O-succinyl-L-homoserine from L-homoserine: step 1/1. Functionally, transfers a succinyl group from succinyl-CoA to L-homoserine, forming succinyl-L-homoserine. The protein is Homoserine O-succinyltransferase of Yersinia enterocolitica serotype O:8 / biotype 1B (strain NCTC 13174 / 8081).